A 406-amino-acid chain; its full sequence is MPLLRRPPAAPHRTPIHHDKRLHLFSTHNTRHRATVSSLPVTCLRIRYSSSNPVRHLCGIPSSRCHAAADPAPSKIPGGGSGALEAGVVGWRDLLLQVGEVLSLGFPVWVASACAVALWRPPAFLWVSPMAQIVGISFTMLGMGMTLTLDDLKTALLMPKELASGFLLQYSVMPLSGFLISKLLNLPSYYAAGLILVSCCPGGTASNIVTYLARGNVALSVLMTAASTFAAAFLTPLLTSKLAGQYVAVDPMGLFVSTSQVVLAPVLLGALLNQYCNGLVQLVSPLMPFIAVATVAVLCGNAIAQNASAILSSGLQVVMSVCWLHASGFFFGYVLSRTIGIDISSSRTISIEVGMQNSVLGVVLASKHFGNPLTAVPCAVSSVCHSVYGSLLAGIWRSLPPNDKGQ.

The transit peptide at 1–64 directs the protein to the chloroplast; that stretch reads MPLLRRPPAA…RHLCGIPSSR (64 aa). The next 9 helical transmembrane spans lie at 98 to 118, 123 to 143, 152 to 172, 187 to 209, 217 to 237, 252 to 272, 278 to 298, 315 to 335, and 376 to 396; these read VGEV…AVAL, AFLW…MLGM, LKTA…QYSV, PSYY…SNIV, VALS…LTPL, MGLF…GALL, GLVQ…VAVL, LQVV…GYVL, and VPCA…AGIW.

Belongs to the bile acid:sodium symporter (BASS) (TC 2.A.28) family.

It localises to the membrane. The protein localises to the plastid. Its subcellular location is the chloroplast envelope. Its function is as follows. May function as sodium-coupled metabolite transporter across the chloroplast envelope. This Oryza sativa subsp. japonica (Rice) protein is Probable sodium/metabolite cotransporter BASS1, chloroplastic (BASS1).